A 151-amino-acid chain; its full sequence is Inorganic triphosphatase (151 aa).

The region spanning 1–148 (MTEIERKFLV…KRYKNKALAL (148 aa)) is the CYTH domain. Residue Tyr27 is the Proton acceptor of the active site.

In terms of assembly, homodimer.

The enzyme catalyses triphosphate + H2O = phosphate + diphosphate. With respect to regulation, activated by magnesium and mangenese ions, and inhibited by calcium, zinc and copper ions. Functionally, involved in the hydrolysis of the beta-gamma-phosphoanhydride linkage of triphosphate-containing substrates (inorganic or nucleoside-linked). Catalyzes the hydrolysis of inorganic triphosphate (PPPi). The enzyme has a strong preference for linear PPPi compared with cyclic PPPi (cyclic trimetaphosphate) and to the linear P4. The longer chains polyphosphate are not hydrolyzed. It has only a slight thiamine triphosphatase (ThTPase) activity. Nucleoside triphosphatase activity is negligible in the presence of magnesium, but a small activity is observed in the presence of manganese, in particular with GTP. In Nitrosomonas europaea (strain ATCC 19718 / CIP 103999 / KCTC 2705 / NBRC 14298), this protein is Inorganic triphosphatase.